The following is a 425-amino-acid chain: UPF0597 protein VSAL_I0741 (425 aa).

Belongs to the UPF0597 family.

The sequence is that of UPF0597 protein VSAL_I0741 from Aliivibrio salmonicida (strain LFI1238) (Vibrio salmonicida (strain LFI1238)).